Consider the following 185-residue polypeptide: Elongation factor P (185 aa).

This sequence belongs to the elongation factor P family.

Its subcellular location is the cytoplasm. Its pathway is protein biosynthesis; polypeptide chain elongation. In terms of biological role, involved in peptide bond synthesis. Stimulates efficient translation and peptide-bond synthesis on native or reconstituted 70S ribosomes in vitro. Probably functions indirectly by altering the affinity of the ribosome for aminoacyl-tRNA, thus increasing their reactivity as acceptors for peptidyl transferase. The protein is Elongation factor P of Desulfitobacterium hafniense (strain DSM 10664 / DCB-2).